We begin with the raw amino-acid sequence, 61 residues long: Large ribosomal subunit protein bL32 (61 aa).

This sequence belongs to the bacterial ribosomal protein bL32 family.

The sequence is that of Large ribosomal subunit protein bL32 from Cytophaga hutchinsonii (strain ATCC 33406 / DSM 1761 / CIP 103989 / NBRC 15051 / NCIMB 9469 / D465).